The primary structure comprises 135 residues: Putative pre-16S rRNA nuclease (135 aa).

This sequence belongs to the YqgF nuclease family.

Its subcellular location is the cytoplasm. Its function is as follows. Could be a nuclease involved in processing of the 5'-end of pre-16S rRNA. The sequence is that of Putative pre-16S rRNA nuclease from Clostridium novyi (strain NT).